Consider the following 318-residue polypeptide: Probable endolytic peptidoglycan transglycosylase RlpA (318 aa).

The first 21 residues, 1 to 21 (MMDKRVVAVAAVLWNVQMLFA), serve as a signal peptide directing secretion. The disordered stretch occupies residues 121–191 (DPNAHASQQR…GVANTTDVPA (71 aa)). Polar residues predominate over residues 125-137 (HASQQRNDRQTSP).

It belongs to the RlpA family.

Functionally, lytic transglycosylase with a strong preference for naked glycan strands that lack stem peptides. The polypeptide is Probable endolytic peptidoglycan transglycosylase RlpA (Treponema pallidum (strain Nichols)).